The following is a 1365-amino-acid chain: Transcription elongation factor spt6 (1365 aa).

Over residues 1–14 (MSENEVVGSPTTNG) the composition is skewed to polar residues. Disordered regions lie at residues 1 to 165 (MSEN…QGHR) and 181 to 202 (FEDEERQEEKYETGPPIESVRP). A compositionally biased stretch (low complexity) spans 24 to 33 (ENGEGTNVDD). Composition is skewed to acidic residues over residues 47 to 64 (NDNDENDSSEESATDEEA), 73 to 82 (IVEDEEDEVP), 102 to 111 (DMLDEEDLEL), and 136 to 156 (ETLENIFSEEEEEEENEVDDE). The residue at position 137 (T137) is a Phosphothreonine. S143 bears the Phosphoserine mark. At S454 the chain carries Phosphoserine. One can recognise an S1 motif domain in the interval 1050–1118 (DAIVPVNVRR…ANFMVDLSLR (69 aa)). The segment covering 1124-1139 (SANSKRQTSSHRTSYW) has biased composition (polar residues). A disordered region spans residues 1124–1146 (SANSKRQTSSHRTSYWDTEAEKR). One can recognise an SH2 domain in the interval 1167–1262 (HPLFKDLNAS…IVLHIKAIAK (96 aa)).

The protein belongs to the SPT6 family.

The protein localises to the nucleus. It is found in the chromosome. Functionally, histone H3-H4 chaperone that plays a role in maintenance of chromatin structure during RNA polymerase II transcription elongation thereby repressing transcription initiation from cryptic promoters. Mediates the reassembly of nucleosomes onto the promoters of at least a selected set of genes during repression; the nucleosome reassembly is essential for transcriptional repression. The protein is Transcription elongation factor spt6 (spt6) of Schizosaccharomyces pombe (strain 972 / ATCC 24843) (Fission yeast).